We begin with the raw amino-acid sequence, 232 residues long: Large ribosomal subunit protein uL1 (232 aa).

It belongs to the universal ribosomal protein uL1 family. Part of the 50S ribosomal subunit.

Its function is as follows. Binds directly to 23S rRNA. The L1 stalk is quite mobile in the ribosome, and is involved in E site tRNA release. Protein L1 is also a translational repressor protein, it controls the translation of the L11 operon by binding to its mRNA. The chain is Large ribosomal subunit protein uL1 from Burkholderia cenocepacia (strain ATCC BAA-245 / DSM 16553 / LMG 16656 / NCTC 13227 / J2315 / CF5610) (Burkholderia cepacia (strain J2315)).